Here is a 37-residue protein sequence, read N- to C-terminus: Photosystem II reaction center protein K (37 aa).

At 1-15 the chain is on the lumenal side; it reads KLPEAYAIFDPLVDV. The chain crosses the membrane as a helical span at residues 16-30; it reads LPVIPVLFFALAFVV. The Cytoplasmic portion of the chain corresponds to 31–37; that stretch reads QAAVGFR.

The protein belongs to the PsbK family. As to quaternary structure, PSII is composed of 1 copy each of membrane proteins PsbA, PsbB, PsbC, PsbD, PsbE, PsbF, PsbH, PsbI, PsbJ, PsbK, PsbL, PsbM, PsbT, PsbX, PsbY, PsbZ, Psb30/Ycf12, peripheral proteins PsbO, CyanoQ (PsbQ), PsbU, PsbV and a large number of cofactors. It forms dimeric complexes. PSII binds multiple chlorophylls, carotenoids and specific lipids. is required as a cofactor.

It is found in the cellular thylakoid membrane. In terms of biological role, one of the components of the core complex of photosystem II (PSII). PSII is a light-driven water:plastoquinone oxidoreductase that uses light energy to abstract electrons from H(2)O, generating O(2) and a proton gradient subsequently used for ATP formation. It consists of a core antenna complex that captures photons, and an electron transfer chain that converts photonic excitation into a charge separation. The protein is Photosystem II reaction center protein K of Thermostichus vulcanus (Synechococcus vulcanus).